A 195-amino-acid chain; its full sequence is Molybdenum cofactor guanylyltransferase (195 aa).

Residues 10 to 12 (LAG), K23, N51, D69, and D99 contribute to the GTP site. D99 serves as a coordination point for Mg(2+).

Belongs to the MobA family. Monomer. The cofactor is Mg(2+).

The protein localises to the cytoplasm. The enzyme catalyses Mo-molybdopterin + GTP + H(+) = Mo-molybdopterin guanine dinucleotide + diphosphate. Its function is as follows. Transfers a GMP moiety from GTP to Mo-molybdopterin (Mo-MPT) cofactor (Moco or molybdenum cofactor) to form Mo-molybdopterin guanine dinucleotide (Mo-MGD) cofactor. The polypeptide is Molybdenum cofactor guanylyltransferase (Histophilus somni (strain 2336) (Haemophilus somnus)).